The primary structure comprises 1311 residues: Suppressor of presenilin protein 4 (1311 aa).

A compositionally biased stretch (polar residues) spans 1–11 (MSSEPTSSIES). Disordered stretches follow at residues 1–58 (MSSE…DDLN) and 75–95 (MFEDDEEDTVSRRRTRRSTAH). C2H2-type zinc fingers lie at residues 112–134 (HACHKCPSRYESKSSLANHTKMH) and 141–163 (FACELCDFSASTLKSLTHHNNIH). Positions 226 to 304 (EFDTTPPPIL…PPPVRKDVEK (79 aa)) are disordered. The segment covering 280 to 293 (SPKGSLPSSSASSV) has biased composition (low complexity). 4 consecutive C2H2-type zinc fingers follow at residues 327 to 349 (QRCPHCPFTTSTVTRLNRHSGGH), 355 to 379 (YICPSENCNFMCRKAGFLQKHYILH), 451 to 476 (KKCNIGECEFLTQTLTQLIVHKVKTH), and 487 to 510 (FLCLTCGHRAKSYAALRTHKLIEH). Residues 544–563 (VKEEPKEADGDESGDESFDS) are disordered. Residues 552–561 (DGDESGDESF) are compositionally biased toward acidic residues. C2H2-type zinc fingers lie at residues 585 to 607 (FCCNMCPYKAPTMNRCQRHYDKH), 613 to 635 (FKCQYCSWSSRSKEVIVNHEKLH), 709 to 731 (FQCTDCPYTSKYRGDMRSHKKRH), 737 to 759 (YRCVQCTYTTNRPVSLKDHLKQH), 794 to 816 (YCCDKCPYVTLALGCLWRHHRNH), and 823 to 845 (NICSNCSYSSIDQRKMEEHTIIH). The tract at residues 865 to 1002 (RPVSSLTDLN…ESPEPDESVE (138 aa)) is disordered. Over residues 874 to 897 (NSEKMNERKSTKRKMLDKVEKMEV) the composition is skewed to basic and acidic residues. A compositionally biased stretch (acidic residues) spans 898-907 (GEDEEDDEES). Positions 908 to 920 (VDKGTDDGDYKQR) are enriched in basic and acidic residues. Over residues 956-979 (NRINYSLLSKNGSGKPTPSTSSAN) the composition is skewed to polar residues. C2H2-type zinc fingers lie at residues 1022–1044 (LKCPDCPYKSSEPDVLEKHRYYH), 1053–1075 (YACSDCTFNTYTPTALLQHLKLH), 1104–1126 (YYCKNCSFKTSIHRNFIEHSAYH), 1162–1184 (KYCKKCTFKCVSQSNFIEHLDRH), 1190–1212 (YKCYSCDYSDNTKSVVDFHQLNH), and 1261–1284 (LKCPSCEYFCHVSSELAFHMSVHH).

As to expression, expressed in neurons.

It is found in the nucleus. Its function is as follows. Probable transcriptional regulator, which participates in the transcriptional repression of the presenilin protein hop-1. Might play a role in the oxidative stress response. The sequence is that of Suppressor of presenilin protein 4 (spr-4) from Caenorhabditis elegans.